A 392-amino-acid polypeptide reads, in one-letter code: Formate-dependent phosphoribosylglycinamide formyltransferase (392 aa).

Residues 22–23 and Glu-82 contribute to the N(1)-(5-phospho-beta-D-ribosyl)glycinamide site; that span reads EL. ATP contacts are provided by residues Arg-114, Lys-155, 160 to 165, 195 to 198, and Glu-203; these read SSGKGQ and EGVV. The 190-residue stretch at 119-308 folds into the ATP-grasp domain; it reads RLAAEELQLP…EFALHVRAFL (190 aa). Positions 267 and 279 each coordinate Mg(2+). Residues Asp-286, Lys-355, and 362–363 contribute to the N(1)-(5-phospho-beta-D-ribosyl)glycinamide site; that span reads RR.

It belongs to the PurK/PurT family. Homodimer.

It catalyses the reaction N(1)-(5-phospho-beta-D-ribosyl)glycinamide + formate + ATP = N(2)-formyl-N(1)-(5-phospho-beta-D-ribosyl)glycinamide + ADP + phosphate + H(+). It participates in purine metabolism; IMP biosynthesis via de novo pathway; N(2)-formyl-N(1)-(5-phospho-D-ribosyl)glycinamide from N(1)-(5-phospho-D-ribosyl)glycinamide (formate route): step 1/1. Functionally, involved in the de novo purine biosynthesis. Catalyzes the transfer of formate to 5-phospho-ribosyl-glycinamide (GAR), producing 5-phospho-ribosyl-N-formylglycinamide (FGAR). Formate is provided by PurU via hydrolysis of 10-formyl-tetrahydrofolate. This is Formate-dependent phosphoribosylglycinamide formyltransferase from Shigella boydii serotype 18 (strain CDC 3083-94 / BS512).